A 1828-amino-acid polypeptide reads, in one-letter code: InaD-like protein (1828 aa).

One can recognise an L27 domain in the interval 5–65 (PAPDKLQVLQ…SIKQLKGQLS (61 aa)). PDZ domains lie at 134–221 (YIDI…AREP), 248–328 (DVEL…ARDP), and 365–453 (GVEL…VRRK). Ser-459 and Ser-522 each carry phosphoserine. In terms of domain architecture, PDZ 4 spans 553-639 (DAELQKYSKL…PFTLVCCRRL (87 aa)). Position 645 is a phosphoserine (Ser-645). PDZ domains lie at 686–758 (IVEL…EVLK) and 1070–1162 (IVEI…QSLS). A disordered region spans residues 1168-1220 (IPSVHNKANKIANNQDQNTEEKKEKRQGTPPPPMKLPPPYKAPSDDSDENEEE). Residues 1196 to 1208 (TPPPPMKLPPPYK) are compositionally biased toward pro residues. Phosphoserine is present on Ser-1211. In terms of domain architecture, PDZ 7 spans 1241 to 1324 (IIELEKDKNG…KVKLVFIRNE (84 aa)). Residues 1333 to 1362 (APFPVPSSSPSSLEDQSGTEPVSSEEDGSL) are disordered. The segment covering 1345-1354 (LEDQSGTEPV) has biased composition (polar residues). PDZ domains are found at residues 1464–1547 (IIEI…YRDE) and 1560–1642 (PVDL…GRLR). Thr-1535 carries the phosphothreonine modification. Residues 1645–1668 (SWTSSRKTSQNSQGSQHSTHSSFH) are compositionally biased toward polar residues. Residues 1645–1669 (SWTSSRKTSQNSQGSQHSTHSSFHP) are disordered. Residues 1703–1789 (TVEIIRELSD…RIILQVVADT (87 aa)) form the PDZ 10 domain. Residues 1805–1828 (YHLGSPTAEHHPEDTEEPLQMTAG) form a disordered region.

In terms of assembly, forms a ternary complex with PALS1 and CRB1. Component of a complex whose core is composed of ARHGAP17, AMOT, PALS1, INADL/PATJ and PARD3/PAR3. Forms a heterotrimeric complex composed of MMP5, LIN7B and PATJ; the N-terminal L27 domain of PALS1 interacts with the L27 domain of PATJ and the C-terminal L27 domain of PALS1 interacts with the L27 domain of LIN7B. Component of a complex composed of CRB3, PALS1 and PATJ. As part of the Crumbs complex; interacts with WWP1, the interaction is enhanced by AMOTL2 and facilitates WWP1 localization to the plasma membrane. The Crumbs complex promotes monoubiquitination of AMOTL2 by WWP1, which activates the Hippo signaling pathway. Interacts (via N-terminus) with PALS1/PALS (via PDZ domain). Interacts with TJP3/ZO-3 and CLDN1/claudin-1. Interacts with ASIC3, KCNJ10, KCNJ15, GRIN2A, GRIN2B, GRIN2C, GRIN2D, NLGN2, and HTR2A. Interacts with MPP7. Directly interacts with HTR4. Interacts (via PDZ domain 8) with WWC1 (via the ADDV motif). Interacts with SLC6A4. Interacts (via C-terminus) with ARHGEF18. Interacts with NPHP1. Interacts with PARD3/PAR3. Interacts (via PDZ1-6 domains) with TJP1/ZO1; the interaction is required for attachment and extension of TJP1/ZO1 condensates along the apical cell interface.

Its subcellular location is the cell junction. It localises to the tight junction. The protein localises to the apical cell membrane. It is found in the cytoplasm. The protein resides in the perinuclear region. Functionally, scaffolding protein that facilitates the localization of proteins to the cell membrane. Required for the correct formation of tight junctions and epithelial apico-basal polarity. Acts (via its L27 domain) as an apical connector and elongation factor for multistranded TJP1/ZO1 condensates that form a tight junction belt, thereby required for the formation of the tight junction-mediated cell barrier. Positively regulates epithelial cell microtubule elongation and cell migration, possibly via facilitating localization of PRKCI/aPKC and PAR3D/PAR3 at the leading edge of migrating cells. Plays a role in the correct reorientation of the microtubule-organizing center during epithelial migration. May regulate the surface expression and/or function of ASIC3 in sensory neurons. May recruit ARHGEF18 to apical cell-cell boundaries. The chain is InaD-like protein from Canis lupus familiaris (Dog).